Here is a 103-residue protein sequence, read N- to C-terminus: MAAKIRQNDEVIVLAGKDKGKRGKVTKVLPNGKVVVEGINIITKHEKPVPALGKAGGLVKKEAAIDASNVAIFNPETNKADRVGFRFEDGKKVRFFKSNEKTI.

Belongs to the universal ribosomal protein uL24 family. Part of the 50S ribosomal subunit.

In terms of biological role, one of two assembly initiator proteins, it binds directly to the 5'-end of the 23S rRNA, where it nucleates assembly of the 50S subunit. One of the proteins that surrounds the polypeptide exit tunnel on the outside of the subunit. The sequence is that of Large ribosomal subunit protein uL24 from Glaesserella parasuis serovar 5 (strain SH0165) (Haemophilus parasuis).